The sequence spans 959 residues: MGLGWFGISSVWLLPMVWRYVARVMAGERGLKGPGTVRIWLATLAVLCASASLEALTSGRDLHGKAGGAVGRGLASLFGHMLGWTGAFLLMLGVLLWVAPMVFGHSWRQLLARLRQAGEAPPVQADARHDEADDGLKPTALGLGGAEQAMGSGHAGASRRHGIEAGSAWRQPAWQPPPRTRESPPQPGEIWPLLNAQGRPEMPLPVAAQPAPVPVPAPAATPKAATQAPSSRSALRATIVSSPFHRPQPSDGDQPPSSPEADDAPSAPVEDAAPAISPAAEPDAPASAPPEPAEPSPPTVDLEAVRQEAEALLAELRGLMTPLAAAPVASPEPEPEPEPEAETEVTPEAEAEPEAEPEAEAEPEAEAEAEAEAEAEPEAEAPAPESVAPALQEAEAATAAEAPLPAPEPAPAIEADDAAPPPPAVPAQKPRIVLPAVVGQVVSNAMPAPAPAAAPVAAAPPAPPRVVDYRLPNVALLTAASPDTVAVPAEHLEETSHLIAQRLAEFKVPVTVAGASAGPVITRFEVDPAIGVRGAQVVGLMKDLARALGVTSIRVVETIPGKTCMGLELPNARRAMIRLSEVVNAPDFQSHASHLVLAMGKDITGNPVVTDLARAPHLLVAGTTGSGKSVAVNAMILSMLYKATPEDVRLIMIDPKMLELSVYEGIPHLLAPVVTDMKQAAHALNWCVGEMEKRYRLMSALGVRNLAGYNQKIRAAQQAGHKVPNPFSLTPDAPEPLSTLPMIVVVIDELADLMMVAGKKIEELIARLAQKARAAGIHLILATQRPSVDVITGLIKANIPTRVAFQVSSKIDSRTILDQMGAETLLGQGDMLFLPPGTGYPQRVHGAFVADEEVHRVVEHWKQFGEPEYDEAILAGDPAEAAAGELFGEGGDAEADPLYDEAAAFVLNTRRASISAVQRQLRIGYNRAARLIEQMEAAGLVSPMGRNGSREVIAPGGGD.

The next 3 helical transmembrane spans lie at 1 to 21, 39 to 59, and 83 to 103; these read MGLGWFGISSVWLLPMVWRYV, IWLATLAVLCASASLEALTSG, and GWTGAFLLMLGVLLWVAPMVF. At 104 to 959 the chain is on the cytoplasmic side; it reads GHSWRQLLAR…REVIAPGGGD (856 aa). Positions 122–427 are disordered; that stretch reads PVQADARHDE…AAPPPPAVPA (306 aa). A compositionally biased stretch (basic and acidic residues) spans 126 to 136; that stretch reads DARHDEADDGL. 2 stretches are compositionally biased toward low complexity: residues 220-229 and 264-286; these read ATPKAATQAP and APSAPVEDAAPAISPAAEPDAPA. Positions 287-298 are enriched in pro residues; that stretch reads SAPPEPAEPSPP. Residues 333 to 379 show a composition bias toward acidic residues; that stretch reads PEPEPEPEAETEVTPEAEAEPEAEPEAEAEPEAEAEAEAEAEAEPEA. A compositionally biased stretch (low complexity) spans 380 to 403; that stretch reads EAPAPESVAPALQEAEAATAAEAP. Positions 605–814 constitute a FtsK domain; sequence GNPVVTDLAR…FQVSSKIDSR (210 aa). 625-630 contacts ATP; that stretch reads GSGKSV.

The protein belongs to the FtsK/SpoIIIE/SftA family. In terms of assembly, homohexamer. Forms a ring that surrounds DNA.

It localises to the cell inner membrane. Its function is as follows. Essential cell division protein that coordinates cell division and chromosome segregation. The N-terminus is involved in assembly of the cell-division machinery. The C-terminus functions as a DNA motor that moves dsDNA in an ATP-dependent manner towards the dif recombination site, which is located within the replication terminus region. Translocation stops specifically at Xer-dif sites, where FtsK interacts with the Xer recombinase, allowing activation of chromosome unlinking by recombination. FtsK orienting polar sequences (KOPS) guide the direction of DNA translocation. FtsK can remove proteins from DNA as it translocates, but translocation stops specifically at XerCD-dif site, thereby preventing removal of XerC and XerD from dif. This chain is DNA translocase FtsK 1 (ftsK1), found in Ralstonia nicotianae (strain ATCC BAA-1114 / GMI1000) (Ralstonia solanacearum).